The following is a 176-amino-acid chain: Large ribosomal subunit protein uL6 (176 aa).

Basic and acidic residues predominate over residues 153 to 170 (PEPYKGKGIRYGDEEVRR). Positions 153–176 (PEPYKGKGIRYGDEEVRRKEAKKK) are disordered.

This sequence belongs to the universal ribosomal protein uL6 family. In terms of assembly, part of the 50S ribosomal subunit.

This protein binds to the 23S rRNA, and is important in its secondary structure. It is located near the subunit interface in the base of the L7/L12 stalk, and near the tRNA binding site of the peptidyltransferase center. The chain is Large ribosomal subunit protein uL6 from Chromohalobacter salexigens (strain ATCC BAA-138 / DSM 3043 / CIP 106854 / NCIMB 13768 / 1H11).